The following is a 263-amino-acid chain: 3-methyl-2-oxobutanoate hydroxymethyltransferase (263 aa).

2 residues coordinate Mg(2+): aspartate 45 and aspartate 84. Residues 45-46 (DS), aspartate 84, and lysine 112 each bind 3-methyl-2-oxobutanoate. Glutamate 114 lines the Mg(2+) pocket. The active-site Proton acceptor is glutamate 180.

The protein belongs to the PanB family. As to quaternary structure, homodecamer; pentamer of dimers. Mg(2+) serves as cofactor.

The protein localises to the cytoplasm. The enzyme catalyses 3-methyl-2-oxobutanoate + (6R)-5,10-methylene-5,6,7,8-tetrahydrofolate + H2O = 2-dehydropantoate + (6S)-5,6,7,8-tetrahydrofolate. Its pathway is cofactor biosynthesis; (R)-pantothenate biosynthesis; (R)-pantoate from 3-methyl-2-oxobutanoate: step 1/2. Functionally, catalyzes the reversible reaction in which hydroxymethyl group from 5,10-methylenetetrahydrofolate is transferred onto alpha-ketoisovalerate to form ketopantoate. This Salmonella enteritidis PT4 (strain P125109) protein is 3-methyl-2-oxobutanoate hydroxymethyltransferase.